A 779-amino-acid chain; its full sequence is GATOR2 complex protein WDR24 (779 aa).

WD repeat units lie at residues 66–106, 112–152, 155–195, 199–239, 243–285, and 289–332; these read SLNF…RNKQ, EHKR…SVST, GQSE…RYER, AHTG…VKEI, QTFA…IPFA, and EHKD…VDRA. Disordered regions lie at residues 506 to 526 and 570 to 590; these read LETN…EGQA and DHPS…VSGS. The C4-type zinc finger occupies 707-729; sequence NCSNCKRPMSNKGWICDRCHQCA. Residues C708, C711, C722, C725, C732, C735, C746, C749, H751, H754, H757, C768, C772, H774, and C776 each coordinate Zn(2+). An RING-type; atypical zinc finger spans residues 730 to 779; the sequence is SVCAVCHHVVKGLFVWCQGCSHGGHLEHVMEWLKQSKHCPAGCGHLCEYT.

This sequence belongs to the WD repeat WDR24 family. In terms of assembly, component of the GATOR2 subcomplex, composed of MIOS, SEC13, SEH1L, WDR24 and WDR59. The GATOR2 complex interacts with CASTOR1 and CASTOR2; the interaction is negatively regulated by arginine. The GATOR2 complex interacts with SESN1, SESN2 and SESN3; the interaction is negatively regulated by amino acids.

The protein localises to the lysosome membrane. It catalyses the reaction S-ubiquitinyl-[E2 ubiquitin-conjugating enzyme]-L-cysteine + [acceptor protein]-L-lysine = [E2 ubiquitin-conjugating enzyme]-L-cysteine + N(6)-ubiquitinyl-[acceptor protein]-L-lysine.. It participates in protein modification; protein ubiquitination. The GATOR2 complex is negatively regulated by the upstream amino acid sensors CASTOR1 and SESN2, which sequester the GATOR2 complex in absence of amino acids. In the presence of abundant amino acids, GATOR2 is released from CASTOR1 and SESN2 and activated. Functionally, catalytic component of the GATOR2 complex, a multiprotein complex that acts as an activator of the amino acid-sensing branch of the mTORC1 signaling pathway. The GATOR2 complex indirectly activates mTORC1 through the inhibition of the GATOR1 subcomplex. GATOR2 probably acts as an E3 ubiquitin-protein ligase toward GATOR1. In the presence of abundant amino acids, the GATOR2 complex mediates ubiquitination of the NPRL2 core component of the GATOR1 complex, leading to GATOR1 inactivation. In the absence of amino acids, GATOR2 is inhibited, activating the GATOR1 complex. In addition to its role in regulation of the mTORC1 complex, promotes the acidification of lysosomes and facilitates autophagic flux. Within the GATOR2 complex, WDR24 constitutes the catalytic subunit that mediates 'Lys-6'-linked ubiquitination of NPRL2. This is GATOR2 complex protein WDR24 from Danio rerio (Zebrafish).